The primary structure comprises 62 residues: Large ribosomal subunit protein bL28 (62 aa).

The protein belongs to the bacterial ribosomal protein bL28 family.

The chain is Large ribosomal subunit protein bL28 from Acholeplasma laidlawii (strain PG-8A).